A 482-amino-acid polypeptide reads, in one-letter code: Catalase (482 aa).

Residues 1 to 11 (MNAMTNKTLTT) show a composition bias toward polar residues. The tract at residues 1 to 21 (MNAMTNKTLTTAAGAPVADNN) is disordered. Catalysis depends on residues His57 and Asn130. Tyr340 is a heme binding site.

This sequence belongs to the catalase family. In terms of assembly, homodimer. Requires heme as cofactor.

The catalysed reaction is 2 H2O2 = O2 + 2 H2O. Functionally, decomposes hydrogen peroxide into water and oxygen; serves to protect cells from the toxic effects of hydrogen peroxide. This chain is Catalase (katA), found in Bordetella bronchiseptica (strain ATCC BAA-588 / NCTC 13252 / RB50) (Alcaligenes bronchisepticus).